Reading from the N-terminus, the 75-residue chain is Peptide Ctri10036 (75 aa).

The first 22 residues, 1-22 (MNSKYLFVFLILNVIFIDLCQG), serve as a signal peptide directing secretion. Position 41 is a lysine amide (lysine 41). Residues 47-75 (ELGSQYDYLQDFRKRELDLDDLLSKFPDY) constitute a propeptide that is removed on maturation.

The protein belongs to the non-disulfide-bridged peptide (NDBP) superfamily. Short antimicrobial peptide (group 4) family. As to expression, expressed by the venom gland.

It is found in the secreted. The sequence is that of Peptide Ctri10036 from Chaerilus tricostatus (Scorpion).